Here is a 100-residue protein sequence, read N- to C-terminus: NADH-quinone oxidoreductase subunit K 2 (100 aa).

3 helical membrane-spanning segments follow: residues 4–24 (LWWF…GVLL), 28–48 (ILVV…NFIA), and 60–80 (IFAI…LGIL).

It belongs to the complex I subunit 4L family. NDH-1 is composed of 14 different subunits. Subunits NuoA, H, J, K, L, M, N constitute the membrane sector of the complex.

Its subcellular location is the cell inner membrane. The catalysed reaction is a quinone + NADH + 5 H(+)(in) = a quinol + NAD(+) + 4 H(+)(out). In terms of biological role, NDH-1 shuttles electrons from NADH, via FMN and iron-sulfur (Fe-S) centers, to quinones in the respiratory chain. The immediate electron acceptor for the enzyme in this species is believed to be ubiquinone. Couples the redox reaction to proton translocation (for every two electrons transferred, four hydrogen ions are translocated across the cytoplasmic membrane), and thus conserves the redox energy in a proton gradient. This Rhizobium etli (strain CIAT 652) protein is NADH-quinone oxidoreductase subunit K 2.